Here is a 112-residue protein sequence, read N- to C-terminus: 2Fe-2S ferredoxin (112 aa).

Residues 5–107 (IKVTFIINDG…GIKVRIPATT (103 aa)) form the 2Fe-2S ferredoxin-type domain. 4 residues coordinate [2Fe-2S] cluster: Cys42, Cys48, Cys51, and Cys88.

It belongs to the adrenodoxin/putidaredoxin family. [2Fe-2S] cluster is required as a cofactor.

In terms of biological role, ferredoxin are iron-sulfur proteins that transfer electrons in a wide variety of metabolic reactions. In Rickettsia conorii (strain ATCC VR-613 / Malish 7), this protein is 2Fe-2S ferredoxin (fdxB).